A 254-amino-acid chain; its full sequence is Low affinity immunoglobulin gamma Fc region receptor III-A (254 aa).

The first 16 residues, methionine 1–alanine 16, serve as a signal peptide directing secretion. At glycine 17–glutamine 208 the chain is on the extracellular side. 2 consecutive Ig-like C2-type domains span residues proline 24–histidine 105 and glycine 107–threonine 189. Cystine bridges form between cysteine 47–cysteine 89 and cysteine 128–cysteine 172. Residues asparagine 56, asparagine 63, and asparagine 82 are each glycosylated (N-linked (GlcNAc...) asparagine). Residues asparagine 180 and asparagine 187 are each glycosylated (N-linked (GlcNAc...) asparagine). The chain crosses the membrane as a helical span at residues valine 209–methionine 229. Topologically, residues lysine 230–lysine 254 are cytoplasmic.

In terms of assembly, forms a heterooligomeric complex with ITAM-containing signaling subunits, either a homodimer of CD247, a homodimer of FCER1G or a heterodimer of CD247 and FCER1G. Interacts (via transmembrane domain) with signaling subunits; this interaction is a prerequisite for receptor complex expression on the cell surface and intracellular signal transduction. Binds the Fc region of antigen-complexed IgG with a preference for IgG1 and IgG3 isotypes. Interacts with CD2; this interaction is involved in NK cell activation and cytotoxicity. Interacts with S100A4; this interaction inhibits PKC-dependent phosphorylation of FCGR3A. Post-translationally, glycosylated. Glycosylation plays an inhibitory role in the interaction with IgG1 and IgG2. In terms of processing, undergoes rapid ectodomain shedding upon NK cell stimulation. The soluble form is produced by a proteolytic cleavage mediated by ADAM17. Repeated stimulation causes receptor shedding, a mechanism that allows for increased NK cell motility and detachment from opsonized target cells while avoiding activation-induced NK cell apoptosis. Lymphocytes and monocytes.

Its subcellular location is the cell membrane. The protein localises to the secreted. Functionally, receptor for the invariable Fc fragment of immunoglobulin gamma (IgG). Optimally activated upon binding of clustered antigen-IgG complexes displayed on cell surfaces, triggers lysis of antibody-coated cells, a process known as antibody-dependent cellular cytotoxicity (ADCC). Does not bind free monomeric IgG, thus avoiding inappropriate effector cell activation in the absence of antigenic trigger. Mediates IgG effector functions on natural killer (NK) cells. Binds antigen-IgG complexes generated upon infection and triggers NK cell-dependent cytokine production and degranulation to limit viral load and propagation. Involved in the generation of memory-like adaptive NK cells capable to produce high amounts of IFNG and to efficiently eliminate virus-infected cells via ADCC. Regulates NK cell survival and proliferation, in particular by preventing NK cell progenitor apoptosis. Fc-binding subunit that associates with CD247 and/or FCER1G adapters to form functional signaling complexes. Following the engagement of antigen-IgG complexes, triggers phosphorylation of immunoreceptor tyrosine-based activation motif (ITAM)-containing adapters with subsequent activation of phosphatidylinositol 3-kinase signaling and sustained elevation of intracellular calcium that ultimately drive NK cell activation. The ITAM-dependent signaling coupled to receptor phosphorylation by PKC mediates robust intracellular calcium flux that leads to production of pro-inflammatory cytokines, whereas in the absence of receptor phosphorylation it mainly activates phosphatidylinositol 3-kinase signaling leading to cell degranulation. Costimulates NK cells and trigger lysis of target cells independently of IgG binding. Mediates the antitumor activities of therapeutic antibodies. Upon ligation on monocytes triggers TNFA-dependent ADCC of IgG-coated tumor cells. Mediates enhanced ADCC in response to afucosylated IgGs. The sequence is that of Low affinity immunoglobulin gamma Fc region receptor III-A (FCGR3A) from Macaca fascicularis (Crab-eating macaque).